The primary structure comprises 417 residues: Putative competence-damage inducible protein (417 aa).

The protein belongs to the CinA family.

The sequence is that of Putative competence-damage inducible protein from Shouchella clausii (strain KSM-K16) (Alkalihalobacillus clausii).